Consider the following 984-residue polypeptide: Putative formate dehydrogenase SAB2186c (984 aa).

Positions glutamate 3–aspartate 79 constitute a 2Fe-2S ferredoxin-type domain. [2Fe-2S] cluster is bound by residues cysteine 37, cysteine 48, cysteine 51, and cysteine 63. A 4Fe-4S His(Cys)3-ligated-type domain is found at aspartate 79–glycine 119. Positions 95, 99, 102, 109, 147, 150, 153, 157, 190, 193, 196, 200, 264, 267, 271, and 299 each coordinate [4Fe-4S] cluster. 4Fe-4S ferredoxin-type domains are found at residues proline 138–threonine 165 and asparagine 181–glutamate 211. Residues methionine 252–lysine 984 are formate dehydrogenase. Positions isoleucine 257–glutamine 313 constitute a 4Fe-4S Mo/W bis-MGD-type domain.

The protein in the C-terminal section; belongs to the prokaryotic molybdopterin-containing oxidoreductase family. Requires [2Fe-2S] cluster as cofactor. [4Fe-4S] cluster serves as cofactor. Mo-bis(molybdopterin guanine dinucleotide) is required as a cofactor.

It carries out the reaction formate + NAD(+) = CO2 + NADH. This Staphylococcus aureus (strain bovine RF122 / ET3-1) protein is Putative formate dehydrogenase SAB2186c.